We begin with the raw amino-acid sequence, 218 residues long: Large ribosomal subunit protein uL3 (218 aa).

The interval 126 to 169 (HGFSRGPMTHGSKNHRQPGSIGAGTTPGRIYPGKRMSGRYGGKK) is disordered.

This sequence belongs to the universal ribosomal protein uL3 family. As to quaternary structure, part of the 50S ribosomal subunit. Forms a cluster with proteins L14 and L19.

Functionally, one of the primary rRNA binding proteins, it binds directly near the 3'-end of the 23S rRNA, where it nucleates assembly of the 50S subunit. The sequence is that of Large ribosomal subunit protein uL3 from Synechococcus sp. (strain CC9902).